The following is a 442-amino-acid chain: Putative mannan endo-1,6-alpha-mannosidase C1198.07c (442 aa).

An N-terminal signal peptide occupies residues 1–19; sequence MRYLSFFFEFFFLFSFAFA. The Lumenal portion of the chain corresponds to 20 to 421; that stretch reads FDFDVTSDDS…TPATKSDKGW (402 aa). 7 N-linked (GlcNAc...) asparagine glycosylation sites follow: N75, N124, N193, N229, N254, N257, and N356. Residues 422–442 form a helical membrane-spanning segment; it reads AGFLTFAFSFVFLLFSIWLYF.

The protein belongs to the glycosyl hydrolase 76 family.

The protein resides in the endoplasmic reticulum membrane. It carries out the reaction Random hydrolysis of (1-&gt;6)-alpha-D-mannosidic linkages in unbranched (1-&gt;6)-mannans.. The chain is Putative mannan endo-1,6-alpha-mannosidase C1198.07c from Schizosaccharomyces pombe (strain 972 / ATCC 24843) (Fission yeast).